A 179-amino-acid chain; its full sequence is GTP-dependent dephospho-CoA kinase (179 aa).

The GTP site is built by Asp-55, Val-57, Asp-74, Lys-76, and Glu-128.

This sequence belongs to the GTP-dependent DPCK family.

The enzyme catalyses 3'-dephospho-CoA + GTP = GDP + CoA + H(+). The protein operates within cofactor biosynthesis; coenzyme A biosynthesis. Functionally, catalyzes the GTP-dependent phosphorylation of the 3'-hydroxyl group of dephosphocoenzyme A to form coenzyme A (CoA). The protein is GTP-dependent dephospho-CoA kinase of Saccharolobus islandicus (strain M.16.27) (Sulfolobus islandicus).